The primary structure comprises 1180 residues: MSADSSPLVGSTPTGYGTLTIGTSIDPLSSSVSSVRLSGYCGSPWRVIGYHVVVWMMAGIPLLLFRWKPLWGVRLRLRPCNLAHAETLVIEIRDKEDSSWQLFTVQVQTEAIGEGSLEPSPQSQAEDGRSQAAVGAVPEGAWKDTAQLHKSEEAVSVGQKRVLRYYLFQGQRYIWIETQQAFYQVSLLDHGRSCDDVHRSRHGLSLQDQMVRKAIYGPNVISIPVKSYPQLLVDEALNPYYGFQAFSIALWLADHYYWYALCIFLISSISICLSLYKTRKQSQTLRDMVKLSMRVCVCRPGGEEEWVDSSELVPGDCLVLPQEGGLMPCDAALVAGECMVNESSLTGESIPVLKTALPEGLGPYCAETHRRHTLFCGTLILQARAYVGPHVLAVVTRTGFCTAKGGLVSSILHPRPINFKFYKHSMKFVAALSVLALLGTIYSIFILYRNRVPLNEIVIRALDLVTVVVPPALPAAMTVCTLYAQSRLRRQGIFCIHPLRINLGGKLQLVCFDKTGTLTEDGLDVMGVVPLKGQAFLPLVPEPRRLPVGPLLRALATCHALSRLQDTPVGDPMDLKMVESTGWVLEEEPAADSAFGTQVLAVMRPPLWEPQLQAMEEPPVPVSVLHRFPFSSALQRMSVVVAWPGATQPEAYVKGSPELVAGLCNPETVPTDFAQMLQSYTAAGYRVVALASKPLPTVPSLEAAQQLTRDTVEGDLSLLGLLVMRNLLKPQTTPVIQALRRTRIRAVMVTGDNLQTAVTVARGCGMVAPQEHLIIVHATHPERGQPASLEFLPMESPTAVNGVKDPDQAASYTVEPDPRSRHLALSGPTFGIIVKHFPKLLPKVLVQGTVFARMAPEQKTELVCELQKLQYCVGMCGDGANDCGALKAADVGISLSQAEASVVSPFTSSMASIECVPMVIREGRCSLDTSFSVFKYMALYSLTQFISVLILYTINTNLGDLQFLAIDLVITTTVAVLMSRTGPALVLGRVRPPGALLSVPVLSSLLLQMVLVTGVQLGGYFLTLAQPWFVPLNRTVAAPDNLPNYENTVVFSLSSFQYLILAAAVSKGAPFRRPLYTNVPFLVALALLSSVLVGLVLVPGLLQGPLALRNITDTGFKLLLLGLVTLNFVGAFMLESVLDQCLPACLRRLRPKRASKKRFKQLERELAEQPWPPLPAGPLR.

At 1-44 the chain is on the cytoplasmic side; that stretch reads MSADSSPLVGSTPTGYGTLTIGTSIDPLSSSVSSVRLSGYCGSP. An intramembrane segment occupies 45 to 65; it reads WRVIGYHVVVWMMAGIPLLLF. The Cytoplasmic portion of the chain corresponds to 66 to 235; the sequence is RWKPLWGVRL…KSYPQLLVDE (170 aa). Phosphoserine is present on S151. The helical transmembrane segment at 236-253 threads the bilayer; it reads ALNPYYGFQAFSIALWLA. Topologically, residues 254-256 are lumenal; sequence DHY. A helical transmembrane segment spans residues 257-276; that stretch reads YWYALCIFLISSISICLSLY. Topologically, residues 277-427 are cytoplasmic; that stretch reads KTRKQSQTLR…NFKFYKHSMK (151 aa). Residues 428–448 form a helical membrane-spanning segment; it reads FVAALSVLALLGTIYSIFILY. The Lumenal segment spans residues 449 to 463; it reads RNRVPLNEIVIRALD. A helical transmembrane segment spans residues 464–484; sequence LVTVVVPPALPAAMTVCTLYA. Residues 485–930 are Cytoplasmic-facing; the sequence is QSRLRRQGIF…REGRCSLDTS (446 aa). D513 functions as the 4-aspartylphosphate intermediate in the catalytic mechanism. Mg(2+) contacts are provided by D878 and D882. Residues 931-951 traverse the membrane as a helical segment; the sequence is FSVFKYMALYSLTQFISVLIL. Residues 952–957 lie on the Lumenal side of the membrane; it reads YTINTN. The chain crosses the membrane as a helical span at residues 958–978; that stretch reads LGDLQFLAIDLVITTTVAVLM. Residues 979 to 994 are Cytoplasmic-facing; it reads SRTGPALVLGRVRPPG. Residues 995–1015 form a helical membrane-spanning segment; sequence ALLSVPVLSSLLLQMVLVTGV. Residues 1016–1048 lie on the Lumenal side of the membrane; sequence QLGGYFLTLAQPWFVPLNRTVAAPDNLPNYENT. N-linked (GlcNAc...) asparagine glycosylation occurs at N1033. A helical membrane pass occupies residues 1049–1069; that stretch reads VVFSLSSFQYLILAAAVSKGA. At 1070–1080 the chain is on the cytoplasmic side; the sequence is PFRRPLYTNVP. The chain crosses the membrane as a helical span at residues 1081–1101; it reads FLVALALLSSVLVGLVLVPGL. Residues 1102-1117 are Lumenal-facing; it reads LQGPLALRNITDTGFK. N1110 carries an N-linked (GlcNAc...) asparagine glycan. A helical membrane pass occupies residues 1118-1138; it reads LLLLGLVTLNFVGAFMLESVL. Residues 1139–1180 lie on the Cytoplasmic side of the membrane; the sequence is DQCLPACLRRLRPKRASKKRFKQLERELAEQPWPPLPAGPLR.

The protein belongs to the cation transport ATPase (P-type) (TC 3.A.3) family. Type V subfamily. Interacts with MYCBP2; the interaction inhibits the ubiquitination of TSC2 by MYCBP2. Interacts with HDAC6; the interaction results in recruitment of HDAC6 to lysosomes to promote CTTN deacetylation. Post-translationally, autophosphorylated. Accumulates in an inactive autophosphorylated state and autophosphorylation is stimulated by phosphatidic acid and phosphatidylinositol 3,5-bisphosphate but not by Mn(2+) or Zn(2+). The presence of spermine results in a dose-dependent reduction in autophosphorylation. Expressed in brain; protein levels are markedly increased in brain from subjects with Parkinson disease and subjects with dementia with Lewy bodies. Detected in pyramidal neurons located throughout the cingulate cortex (at protein level). In the substantia nigra, it is found in neuromelanin-positive dopaminergic neurons (at protein level).

Its subcellular location is the lysosome membrane. The protein resides in the late endosome membrane. It is found in the endosome. The protein localises to the multivesicular body membrane. It localises to the cytoplasmic vesicle. Its subcellular location is the autophagosome membrane. It carries out the reaction spermidine(out) + ATP + H2O = spermidine(in) + ADP + phosphate + H(+). The catalysed reaction is spermine(out) + ATP + H2O = spermine(in) + ADP + phosphate + H(+). Its activity is regulated as follows. Accumulates in an inactive autophosphorylated state. The presence of spermine results in a dose-dependent reduction in autophosphorylation. In terms of biological role, ATPase which acts as a lysosomal polyamine exporter with high affinity for spermine. Also stimulates cellular uptake of polyamines and protects against polyamine toxicity. Plays a role in intracellular cation homeostasis and the maintenance of neuronal integrity. Contributes to cellular zinc homeostasis. Confers cellular protection against Mn(2+) and Zn(2+) toxicity and mitochondrial stress. Required for proper lysosomal and mitochondrial maintenance. Regulates the autophagy-lysosome pathway through the control of SYT11 expression at both transcriptional and post-translational levels. Facilitates recruitment of deacetylase HDAC6 to lysosomes to deacetylate CTTN, leading to actin polymerization, promotion of autophagosome-lysosome fusion and completion of autophagy. Promotes secretion of exosomes as well as secretion of SCNA via exosomes. Plays a role in lipid homeostasis. The polypeptide is Polyamine-transporting ATPase 13A2 (Homo sapiens (Human)).